We begin with the raw amino-acid sequence, 156 residues long: Ribosome maturation factor RimP (156 aa).

The protein belongs to the RimP family.

It localises to the cytoplasm. Its function is as follows. Required for maturation of 30S ribosomal subunits. The sequence is that of Ribosome maturation factor RimP from Bacillus cereus (strain B4264).